A 293-amino-acid polypeptide reads, in one-letter code: Nucleotide-binding protein CKR_3143 (293 aa).

8 to 15 (GLSGAGKT) is an ATP binding site. 59–62 (DIRG) lines the GTP pocket.

The protein belongs to the RapZ-like family.

Its function is as follows. Displays ATPase and GTPase activities. In Clostridium kluyveri (strain NBRC 12016), this protein is Nucleotide-binding protein CKR_3143.